The chain runs to 520 residues: Ubiquitin carboxyl-terminal hydrolase MINDY-1 (520 aa).

The segment at 1 to 155 is disordered; it reads MADSCADTVD…ENEGAVAGAM (155 aa). A compositionally biased stretch (basic and acidic residues) spans 26 to 37; the sequence is KNEDLEQTKPQK. Residues 43 to 54 are compositionally biased toward polar residues; sequence TEESSACVSQIK. Positions 77 to 86 are enriched in low complexity; that stretch reads ATSSASVTSK. Composition is skewed to polar residues over residues 93 to 112 and 132 to 146; these read VINS…SFSM and SAKS…SVQE. Residue Cys-189 is the Nucleophile of the active site. The active-site Proton acceptor is His-371. Disordered regions lie at residues 422-441 and 467-520; these read SQKP…QQMQ and ELAR…CCIL. Positions 441-479 are ubiquitin-binding domain (UBD); that stretch reads QIDQDYLVAMSLQQEQGEAPGPLSDLELARQLQQEEYQQ. A compositionally biased stretch (low complexity) spans 469–498; the sequence is ARQLQQEEYQQPQTQQQQQQQPSAGQMRGQ. Positions 511–520 are enriched in basic and acidic residues; the sequence is KKEETDCCIL.

This sequence belongs to the MINDY deubiquitinase family. FAM63 subfamily.

The enzyme catalyses Thiol-dependent hydrolysis of ester, thioester, amide, peptide and isopeptide bonds formed by the C-terminal Gly of ubiquitin (a 76-residue protein attached to proteins as an intracellular targeting signal).. Hydrolase that can specifically remove 'Lys-48'-linked conjugated ubiquitin from proteins. May play a regulatory role at the level of protein turnover. The chain is Ubiquitin carboxyl-terminal hydrolase MINDY-1 (mindy1) from Danio rerio (Zebrafish).